A 525-amino-acid chain; its full sequence is MAHKVTSANEPNPLTGKRLSSCPLTRSGVTEVAQIAGRTPKMEDFVPWTVDNLKSQFEAVGLLMAHSYLPANAEEGIAYPPLVHTYESLSPASTCRVCDLLDTLVNHSDAPVAFFEDYALLCYYCLNAPRAWISSLITGMDFLHILIKYFPMAGGLDSLFMPSRILAIDIQLHFYICRCFLPVSSSDMIRNANLGYYKLEFLKSILTGQSPANFCFKSMWPRTTPTFLTLPGPRTCKDSQDVPGDVGRGLYTALCCHLPTRNRVQHPFLRAEKGGLSPEITTKADYCGLLLGTWQGTDLLGGPGHHAIGLNAEYSGDELAELALAITRPEAGDHSQGPCLLAPMFGLRHKNASRTICPLCESLGAHPDAKDTLDRFKSLILDSFGNNIKILDRIVFLIKTQNTLLDVPCPRLRAWLQMCTPQDFHKHLFCDPLCAINHSITNPSVLFGQIYPPSFQAFKAALAAGQNLEQGVCDSLITLVYIFKSTQVARVGKTILVDVTKELDVVLRIHGLDLVQSYQTSQVYV.

Positions 1–12 (MAHKVTSANEPN) are enriched in polar residues. Positions 1–20 (MAHKVTSANEPNPLTGKRLS) are disordered. The Zn(2+) site is built by Cys95, Cys98, His173, Cys179, Cys255, Cys256, Cys357, Cys360, His427, Cys434, Cys473, and His510. Zinc finger stretches follow at residues 95–179 (CRVC…ICRC), 255–510 (CCHL…LRIH), and 357–434 (CPLC…DPLC).

The protein belongs to the herpesviridae UL32 protein family.

It is found in the host cytoplasm. It localises to the host nucleus. Plays a role in efficient localization of neo-synthesized capsids to nuclear replication compartments, thereby controlling cleavage and packaging of virus genomic DNA. The protein is Packaging protein UL32 homolog of Epstein-Barr virus (strain B95-8) (HHV-4).